A 700-amino-acid chain; its full sequence is Peroxisomal acyl-coenzyme A oxidase 1 (700 aa).

Residues Thr-147, Gly-186, and 412 to 417 (CGGHGY) contribute to the FAD site. The active-site Proton acceptor is the Glu-437. Residues 698 to 700 (SKL) carry the Microbody targeting signal motif.

It belongs to the acyl-CoA oxidase family. The cofactor is FAD.

The protein localises to the peroxisome. It carries out the reaction a 2,3-saturated acyl-CoA + O2 = a (2E)-enoyl-CoA + H2O2. Catalyzes the desaturation of acyl-CoAs to 2-trans-enoyl-CoAs. First enzyme of the fatty acid beta-oxidation pathway. This Dictyostelium discoideum (Social amoeba) protein is Peroxisomal acyl-coenzyme A oxidase 1 (acox1).